Reading from the N-terminus, the 414-residue chain is Serine hydroxymethyltransferase (414 aa).

(6S)-5,6,7,8-tetrahydrofolate-binding positions include Leu-118 and 122 to 124; that span reads GHL. Residue Lys-227 is modified to N6-(pyridoxal phosphate)lysine. (6S)-5,6,7,8-tetrahydrofolate-binding positions include Glu-240 and 350–352; that span reads SPF.

It belongs to the SHMT family. In terms of assembly, homodimer. The cofactor is pyridoxal 5'-phosphate.

Its subcellular location is the cytoplasm. It carries out the reaction (6R)-5,10-methylene-5,6,7,8-tetrahydrofolate + glycine + H2O = (6S)-5,6,7,8-tetrahydrofolate + L-serine. It functions in the pathway one-carbon metabolism; tetrahydrofolate interconversion. The protein operates within amino-acid biosynthesis; glycine biosynthesis; glycine from L-serine: step 1/1. Functionally, catalyzes the reversible interconversion of serine and glycine with tetrahydrofolate (THF) serving as the one-carbon carrier. This reaction serves as the major source of one-carbon groups required for the biosynthesis of purines, thymidylate, methionine, and other important biomolecules. Also exhibits THF-independent aldolase activity toward beta-hydroxyamino acids, producing glycine and aldehydes, via a retro-aldol mechanism. The sequence is that of Serine hydroxymethyltransferase from Bacillus thuringiensis (strain Al Hakam).